A 210-amino-acid polypeptide reads, in one-letter code: Regulator of G-protein signaling 17 (210 aa).

The segment at 1–21 (MRKRQQSQNEGTQAVSQAPGN) is disordered. The region spanning 84–200 (NFDKMMKTPA…LNSQIYKAFV (117 aa)) is the RGS domain. Y137 bears the Phosphotyrosine mark.

Interacts with GNAI1 and GNAQ. Interacts with GNAZ and GNAI2. Interacts with OPRM1. Forms a complex with mu-opioid receptors and G(alpha)z/i2 subunits, including GNAZ and GNAI2; the formation of this complex results in mu-opioid receptor desensitization. Interacts with HINT1. In terms of processing, N- and O-glycosylated in synapsomal membranes. Post-translationally, serine phosphorylated in synapsomal membranes. Sumoylated with SUMO1 and SUM02 in synaptosomes. The sumoylated forms act as a scaffold for sequestering mu-opioid receptor-activated G(alpha) subunits. Desumoylated by HINT1. As to expression, detected in brain (at protein level). Highly expressed in the hypothalamus, periaqueductal gray matter, and pons-medulla. Lower levels in the thalamus, cortex and spinal cord. Weak expression in the striatum and cerebellum.

Its subcellular location is the membrane. The protein localises to the synapse. The protein resides in the synaptosome. It localises to the nucleus. It is found in the cytoplasm. Regulates G protein-coupled receptor signaling cascades, including signaling via muscarinic acetylcholine receptor CHRM2 and dopamine receptor DRD2. Inhibits signal transduction by increasing the GTPase activity of G protein alpha subunits, thereby driving them into their inactive GDP-bound form. Binds selectively to GNAZ and GNAI2 subunits, accelerates their GTPase activity and regulates their signaling activities. Negatively regulates mu-opioid receptor-mediated activation of the G-proteins. The polypeptide is Regulator of G-protein signaling 17 (Rgs17) (Mus musculus (Mouse)).